Consider the following 246-residue polypeptide: tRNA pseudouridine synthase A (246 aa).

Residue aspartate 52 is the Nucleophile of the active site. Tyrosine 111 is a binding site for substrate.

The protein belongs to the tRNA pseudouridine synthase TruA family. As to quaternary structure, homodimer.

The enzyme catalyses uridine(38/39/40) in tRNA = pseudouridine(38/39/40) in tRNA. Formation of pseudouridine at positions 38, 39 and 40 in the anticodon stem and loop of transfer RNAs. In Ehrlichia ruminantium (strain Welgevonden), this protein is tRNA pseudouridine synthase A.